The chain runs to 262 residues: Protein BREAKING OF ASYMMETRY IN THE STOMATAL LINEAGE (262 aa).

2 disordered regions span residues D32 to V107 and K129 to S222. The span at N37–N47 shows a compositional bias: low complexity. 2 consecutive short sequence motifs (nuclear localization signal) follow at residues F50–I57 and K61–K68. The segment covering K51–E66 has biased composition (basic residues). Phosphoserine; by ASK7 is present on residues S72, S85, S86, and S87. Positions R84–S95 are enriched in low complexity. Residue S89 is modified to Phosphoserine; by ASK7 and MPK6. Position 91 is a phosphothreonine; by ASK7 (T91). Residues K129–P146 are compositionally biased toward basic and acidic residues. A phosphoserine; by MPK6 mark is found at S145 and S168. The segment covering N179–D189 has biased composition (polar residues). The span at V190–E200 shows a compositional bias: basic and acidic residues. The required for polarization at the cell cortex stretch occupies residues S222–F262. The FxFP, required for cortical polarity formation motif lies at F223–P226. Phosphoserine; by MPK6 occurs at positions 235 and 246.

Component of a complex made of POLAR, BASL, ASK7/BIN2 and ASK3/SK12. Interacts with POLAR, ASK7/BIN2 and ASK3/SK12. Binds to YDA when phosphorylated. Interacts with MPK6, MPK3 and MKK5. In terms of processing, cortical localization of BASL requires phosphorylation mediated by MPK3 and MPK6. Phosphorylation promotes YDA binding. Phosphorylation status modulates subcellular mobility. Mostly expressed in stomatal lineage cells including asymmetrically dividing meristemoid mother cells (MMCs) and meristemoids, and, at lower levels, in their sisters. Also present in vasculature. Expressed at low levels in the epidermal pavement cells.

It localises to the cytoplasm. The protein localises to the nucleus. Its subcellular location is the cell cortex. The protein resides in the cell membrane. Regulates asymmetric cell division (ACD), especially in stomatal-lineage cells, probably by modulating accumulation and subcellular polarization of POLAR and SPCH. Mediates an attenuation of MAPK signaling upon polarization of POLAR and ASK7/BIN2 in stomatal lineage ground cells (SLGCs) undergoing ACD, and relieves BIN2 inhibition of SPCH in the nucleus. When phosphorylated, functions as a scaffold and recruits the MAPKKK YODA, MPK3 and MPK6 to spatially reorganize the MAPK signaling pathway at the cortex of cells undergoing ACD. Cortical polarization leads to elevated nuclear MPK6 signaling and lowered SPCH abundance in one of the two daughter cells, thus differentiating the two daughter cells after ACD. This chain is Protein BREAKING OF ASYMMETRY IN THE STOMATAL LINEAGE, found in Arabidopsis thaliana (Mouse-ear cress).